The following is a 351-amino-acid chain: DNA polymerase IV (351 aa).

One can recognise a UmuC domain in the interval 4–185 (IIHVDMDCFF…LPLAKIPGVG (182 aa)). Residues D8 and D103 each coordinate Mg(2+). E104 is an active-site residue.

This sequence belongs to the DNA polymerase type-Y family. Monomer. Requires Mg(2+) as cofactor.

It localises to the cytoplasm. The catalysed reaction is DNA(n) + a 2'-deoxyribonucleoside 5'-triphosphate = DNA(n+1) + diphosphate. Its function is as follows. Poorly processive, error-prone DNA polymerase involved in untargeted mutagenesis. Copies undamaged DNA at stalled replication forks, which arise in vivo from mismatched or misaligned primer ends. These misaligned primers can be extended by PolIV. Exhibits no 3'-5' exonuclease (proofreading) activity. May be involved in translesional synthesis, in conjunction with the beta clamp from PolIII. The polypeptide is DNA polymerase IV (Escherichia coli O1:K1 / APEC).